The chain runs to 716 residues: MIYQSPTIQVELLEDNIAKLCFNAQGSVNKFDRETIASLDAALDSIKQNTNIKALLLTSAKSTFIVGADITEFLTLFQQDDATLLAWVEQANAVFNKLEDLPFPTASAINGFALGGGCETILATDLRVADTNARIGLPETKLGLIPGFGGTVRLPRVIGADNALEWITTAKDQRPEDALKVGAIDAVVAPENLEAAAIQMLHDALNGSLDWQARRTKKQSPLQLPKLEAMMSFATAKGMVFSVAGKHYPAPMAAVNVVEQAAGLDRDGALKVEALAFIKLAKTDVAQALIGIFLNDQFVKGKAKKAGKLAKDVNQAAVLGAGIMGGGIAYQSASKGTPIVMKDIAQPALELGLNEAAKILTTQVARGRSTPEKMAKVLNNITPSLDYAAIKNSDIVVEAVVEHPKVKATVLAEVEGYVSEDAIIASNTSTISINLLAKSLKKPERFCGMHFFNPVHKMPLVEIIRGEHSSEETIATVVAYASKMGKTPIVVNDCPGFFVNRVLFPYFAGFSGLLAEGADFAAVDKVMEKQFGWPMGPAYLLDVVGLDTGHHAQAVMAEGFPDRMGKNGKDAIDIMFENKRLGQKNTKGFYAYSVDRRGKPKKDIDPTSYELLSAEFGELKAFESDDIIARCMIPMIIETVRCLEEGIIASPAEGDMGLVYGIGFPPFRGGVFRYLDTMGVANFVALADKYAHLGGLYQVTDAMRALAANNGSYYQA.

Residues 1 to 189 (MIYQSPTIQV…KVGAIDAVVA (189 aa)) are enoyl-CoA hydratase/isomerase. Substrate is bound at residue Asp296. The 3-hydroxyacyl-CoA dehydrogenase stretch occupies residues 311–716 (KDVNQAAVLG…AANNGSYYQA (406 aa)). NAD(+) is bound by residues Met324, Asp343, 400-402 (VVE), Lys407, and Ser429. The active-site For 3-hydroxyacyl-CoA dehydrogenase activity is the His450. Asn453 is a binding site for NAD(+). The substrate site is built by Asn500 and Tyr660.

This sequence in the N-terminal section; belongs to the enoyl-CoA hydratase/isomerase family. It in the C-terminal section; belongs to the 3-hydroxyacyl-CoA dehydrogenase family. As to quaternary structure, heterotetramer of two alpha chains (FadB) and two beta chains (FadA).

It carries out the reaction a (3S)-3-hydroxyacyl-CoA + NAD(+) = a 3-oxoacyl-CoA + NADH + H(+). The catalysed reaction is a (3S)-3-hydroxyacyl-CoA = a (2E)-enoyl-CoA + H2O. It catalyses the reaction a 4-saturated-(3S)-3-hydroxyacyl-CoA = a (3E)-enoyl-CoA + H2O. The enzyme catalyses (3S)-3-hydroxybutanoyl-CoA = (3R)-3-hydroxybutanoyl-CoA. It carries out the reaction a (3Z)-enoyl-CoA = a 4-saturated (2E)-enoyl-CoA. The catalysed reaction is a (3E)-enoyl-CoA = a 4-saturated (2E)-enoyl-CoA. Its pathway is lipid metabolism; fatty acid beta-oxidation. Its function is as follows. Involved in the aerobic and anaerobic degradation of long-chain fatty acids via beta-oxidation cycle. Catalyzes the formation of 3-oxoacyl-CoA from enoyl-CoA via L-3-hydroxyacyl-CoA. It can also use D-3-hydroxyacyl-CoA and cis-3-enoyl-CoA as substrate. This chain is Fatty acid oxidation complex subunit alpha, found in Shewanella frigidimarina (strain NCIMB 400).